The following is a 193-amino-acid chain: Potassium-transporting ATPase KdpC subunit (193 aa).

The helical transmembrane segment at 14–34 threads the bilayer; sequence ITFTFLVLCGLVYPLIVTGIA.

The protein belongs to the KdpC family. In terms of assembly, the system is composed of three essential subunits: KdpA, KdpB and KdpC.

The protein localises to the cell membrane. Its function is as follows. Part of the high-affinity ATP-driven potassium transport (or Kdp) system, which catalyzes the hydrolysis of ATP coupled with the electrogenic transport of potassium into the cytoplasm. This subunit acts as a catalytic chaperone that increases the ATP-binding affinity of the ATP-hydrolyzing subunit KdpB by the formation of a transient KdpB/KdpC/ATP ternary complex. The sequence is that of Potassium-transporting ATPase KdpC subunit from Bacillus anthracis (strain A0248).